Reading from the N-terminus, the 434-residue chain is Histidinol dehydrogenase (434 aa).

3 residues coordinate NAD(+): tyrosine 130, glutamine 188, and asparagine 211. Residues serine 237, glutamine 259, and histidine 262 each coordinate substrate. Zn(2+) contacts are provided by glutamine 259 and histidine 262. Active-site proton acceptor residues include glutamate 326 and histidine 327. Residues histidine 327, aspartate 360, glutamate 414, and histidine 419 each coordinate substrate. Aspartate 360 is a binding site for Zn(2+). Histidine 419 lines the Zn(2+) pocket.

The protein belongs to the histidinol dehydrogenase family. As to quaternary structure, homodimer. Zn(2+) serves as cofactor.

The enzyme catalyses L-histidinol + 2 NAD(+) + H2O = L-histidine + 2 NADH + 3 H(+). Its pathway is amino-acid biosynthesis; L-histidine biosynthesis; L-histidine from 5-phospho-alpha-D-ribose 1-diphosphate: step 9/9. In terms of biological role, catalyzes the sequential NAD-dependent oxidations of L-histidinol to L-histidinaldehyde and then to L-histidine. The polypeptide is Histidinol dehydrogenase (Escherichia coli O6:H1 (strain CFT073 / ATCC 700928 / UPEC)).